The primary structure comprises 435 residues: 3-phosphoshikimate 1-carboxyvinyltransferase (435 aa).

Positions 22, 23, and 27 each coordinate 3-phosphoshikimate. Lysine 22 contacts phosphoenolpyruvate. Residues glycine 95 and arginine 123 each coordinate phosphoenolpyruvate. The 3-phosphoshikimate site is built by serine 168, glutamine 170, aspartate 319, and lysine 346. Residue glutamine 170 participates in phosphoenolpyruvate binding. Catalysis depends on aspartate 319, which acts as the Proton acceptor. 2 residues coordinate phosphoenolpyruvate: arginine 350 and arginine 393.

This sequence belongs to the EPSP synthase family. As to quaternary structure, monomer.

The protein resides in the cytoplasm. The enzyme catalyses 3-phosphoshikimate + phosphoenolpyruvate = 5-O-(1-carboxyvinyl)-3-phosphoshikimate + phosphate. Its pathway is metabolic intermediate biosynthesis; chorismate biosynthesis; chorismate from D-erythrose 4-phosphate and phosphoenolpyruvate: step 6/7. Functionally, catalyzes the transfer of the enolpyruvyl moiety of phosphoenolpyruvate (PEP) to the 5-hydroxyl of shikimate-3-phosphate (S3P) to produce enolpyruvyl shikimate-3-phosphate and inorganic phosphate. In Chloroflexus aurantiacus (strain ATCC 29364 / DSM 637 / Y-400-fl), this protein is 3-phosphoshikimate 1-carboxyvinyltransferase.